The primary structure comprises 302 residues: 4-hydroxy-tetrahydrodipicolinate synthase (302 aa).

Thr55 contributes to the pyruvate binding site. Tyr144 functions as the Proton donor/acceptor in the catalytic mechanism. Catalysis depends on Lys172, which acts as the Schiff-base intermediate with substrate. Residue Val214 coordinates pyruvate.

It belongs to the DapA family. Homotetramer; dimer of dimers.

The protein localises to the cytoplasm. The enzyme catalyses L-aspartate 4-semialdehyde + pyruvate = (2S,4S)-4-hydroxy-2,3,4,5-tetrahydrodipicolinate + H2O + H(+). Its pathway is amino-acid biosynthesis; L-lysine biosynthesis via DAP pathway; (S)-tetrahydrodipicolinate from L-aspartate: step 3/4. Functionally, catalyzes the condensation of (S)-aspartate-beta-semialdehyde [(S)-ASA] and pyruvate to 4-hydroxy-tetrahydrodipicolinate (HTPA). The polypeptide is 4-hydroxy-tetrahydrodipicolinate synthase (Prochlorococcus marinus (strain SARG / CCMP1375 / SS120)).